The primary structure comprises 620 residues: Lamin-B2 (620 aa).

A disordered region spans residues 1 to 38; it reads MSPPSPGRRREQRRPRAAATMATPLPGRAGGPATPLSP. The segment at 1–48 is head; sequence MSPPSPGRRREQRRPRAAATMATPLPGRAGGPATPLSPTRLSRLQEKE. Thr-23 and Thr-34 each carry phosphothreonine. Phosphoserine is present on Ser-37. An IF rod domain is found at 46-402; sequence EKEELRELND…KLLEGEEERL (357 aa). Positions 49–83 are coil 1A; it reads ELRELNDRLAHYIDRVRALELENDRLLLKISEKEE. Lys-77 participates in a covalent cross-link: Glycyl lysine isopeptide (Lys-Gly) (interchain with G-Cter in SUMO2). Lys-81 carries the N6-acetyllysine; alternate modification. Residue Lys-81 forms a Glycyl lysine isopeptide (Lys-Gly) (interchain with G-Cter in SUMO2); alternate linkage. The tract at residues 84–95 is linker 1; that stretch reads VTTREVSGIKAL. Residues 96 to 229 are coil 1B; the sequence is YESELADARR…DFRKSVFEEE (134 aa). Glycyl lysine isopeptide (Lys-Gly) (interchain with G-Cter in SUMO2) cross-links involve residues Lys-195 and Lys-255. The tract at residues 230–256 is linker 2; that stretch reads VRETRRRHERRLVEVDSSRQQEYDFKM. The interval 257–400 is coil 2; that stretch reads AQALEELRSQ…YRKLLEGEEE (144 aa). Phosphoserine is present on residues Ser-316 and Ser-407. The segment at 399–464 is disordered; it reads EERLKLSPSP…GTGGSGGFHL (66 aa). The tract at residues 401–620 is tail; sequence RLKLSPSPSS…RTTSRGCYVM (220 aa). Residues 404 to 431 show a composition bias toward low complexity; it reads LSPSPSSRVTVSRATSSSSGSLSATGRL. Thr-413 carries an O-linked (GlcNAc) threonine glycan. Residues Ser-420, Ser-422, Ser-424, and Ser-426 each carry the phosphoserine modification. The residue at position 433 (Arg-433) is an Omega-N-methylarginine. Positions 435–440 match the Nuclear localization signal motif; the sequence is KRKRLE. A compositionally biased stretch (low complexity) spans 444–453; the sequence is PLGSGPSVLG. Positions 462–579 constitute an LTD domain; that stretch reads FHLAQQASAS…EEVAMRTVKK (118 aa). A Glycyl lysine isopeptide (Lys-Gly) (interchain with G-Cter in SUMO2) cross-link involves residue Lys-489. Phosphoserine is present on Ser-497. The disordered stretch occupies residues 581 to 620; it reads SVMRENENGEEEEEEAEFGEEDLFHQQGDPRTTSRGCYVM. The segment covering 588-601 has biased composition (acidic residues); it reads NGEEEEEEAEFGEE. Over residues 609–620 the composition is skewed to polar residues; sequence DPRTTSRGCYVM. A Cysteine methyl ester modification is found at Cys-617. Cys-617 carries S-farnesyl cysteine lipidation. Residues 618-620 constitute a propeptide, removed in mature form; it reads YVM.

The protein belongs to the intermediate filament family. As to quaternary structure, dimer. Lamin dimers then assemble into dimeric head-to-tail polymers. Ultimately, two head-to-tail polymers assemble laterally into a protofilament with a uniformly shaped rod of 3.5 nm in diameter. Interacts with TMEM43. In terms of processing, B-type lamins undergo a series of modifications, such as farnesylation and phosphorylation. Increased phosphorylation of the lamins occurs before envelope disintegration and probably plays a role in regulating lamin associations. Phosphorylation plays a key role in lamin organization, subcellular localization and nuclear envelope disintegration. Phosphorylation by CDK1 at Ser-37 and Ser-407 at the onset of mitosis drives lamin disassembly and nuclear envelope breakdown.

It localises to the nucleus lamina. Lamins are intermediate filament proteins that assemble into a filamentous meshwork, and which constitute the major components of the nuclear lamina, a fibrous layer on the nucleoplasmic side of the inner nuclear membrane. Lamins provide a framework for the nuclear envelope, bridging the nuclear envelope and chromatin, thereby playing an important role in nuclear assembly, chromatin organization, nuclear membrane and telomere dynamics. The structural integrity of the lamina is strictly controlled by the cell cycle, as seen by the disintegration and formation of the nuclear envelope in prophase and telophase, respectively. The chain is Lamin-B2 (LMNB2) from Homo sapiens (Human).